The sequence spans 841 residues: Protein translocase subunit SecA (841 aa).

Residues Q85, 103–107 (GEGKT), and D492 each bind ATP. The segment at 790 to 814 (IQGQTTAHQPKEGDEEKQAKKKPVR) is disordered. Positions 798-807 (QPKEGDEEKQ) are enriched in basic and acidic residues. Zn(2+)-binding residues include C825, C827, C836, and C837.

It belongs to the SecA family. In terms of assembly, monomer and homodimer. Part of the essential Sec protein translocation apparatus which comprises SecA, SecYEG and auxiliary proteins SecDF. Other proteins may also be involved. Requires Zn(2+) as cofactor.

The protein resides in the cell membrane. Its subcellular location is the cytoplasm. The enzyme catalyses ATP + H2O + cellular proteinSide 1 = ADP + phosphate + cellular proteinSide 2.. Functionally, part of the Sec protein translocase complex. Interacts with the SecYEG preprotein conducting channel. Has a central role in coupling the hydrolysis of ATP to the transfer of proteins into and across the cell membrane, serving as an ATP-driven molecular motor driving the stepwise translocation of polypeptide chains across the membrane. The polypeptide is Protein translocase subunit SecA (Bacillus licheniformis (strain ATCC 14580 / DSM 13 / JCM 2505 / CCUG 7422 / NBRC 12200 / NCIMB 9375 / NCTC 10341 / NRRL NRS-1264 / Gibson 46)).